The primary structure comprises 345 residues: HTH-type transcriptional regulator reg1 (345 aa).

The HTH lacI-type domain occupies 1–58; that stretch reads MTTRLADIAAQAGVSEATVSRVLNGKPGVAATTRQSVLAALDVLGYERPVRLRRRSAG. Positions 5 to 24 form a DNA-binding region, H-T-H motif; sequence LADIAAQAGVSEATVSRVLN.

In terms of biological role, transcription repressor involved in control of expression of alpha-amylase and chitinase genes and of actinorhodin production. The sequence is that of HTH-type transcriptional regulator reg1 (reg1) from Streptomyces lividans.